The primary structure comprises 437 residues: Amino-acid acetyltransferase (437 aa).

Residues E289–K429 form the N-acetyltransferase domain.

It belongs to the acetyltransferase family. ArgA subfamily.

It is found in the cytoplasm. It carries out the reaction L-glutamate + acetyl-CoA = N-acetyl-L-glutamate + CoA + H(+). It functions in the pathway amino-acid biosynthesis; L-arginine biosynthesis; N(2)-acetyl-L-ornithine from L-glutamate: step 1/4. The sequence is that of Amino-acid acetyltransferase from Actinobacillus pleuropneumoniae serotype 5b (strain L20).